The following is a 189-amino-acid chain: Putative lipoprotein LppK (189 aa).

An N-terminal signal peptide occupies residues 1-22 (MRRNIRVTLGAATIVAALGLSG). Cys23 carries N-palmitoyl cysteine lipidation. Cys23 carries S-diacylglycerol cysteine lipidation. Disordered stretches follow at residues 26-49 (PEFK…LEAA) and 166-189 (MGNS…TPPG). Over residues 169–179 (SPDSTPSATSP) the composition is skewed to low complexity. Residues 180–189 (APAPSPTPPG) show a composition bias toward pro residues.

It belongs to the MTB12 family.

It is found in the cell membrane. In Mycobacterium tuberculosis (strain CDC 1551 / Oshkosh), this protein is Putative lipoprotein LppK (lppK).